A 266-amino-acid polypeptide reads, in one-letter code: Protein-ADP-ribose hydrolase (266 aa).

Residues 74–265 (TDLKDLKPIK…LYKEALNRDA (192 aa)) form the Macro domain. 3 residues coordinate ADP-D-ribose: aspartate 93, isoleucine 94, and asparagine 107. The Zn(2+) site is built by cysteine 113, histidine 118, and cysteine 120. ADP-D-ribose-binding residues include cysteine 120, isoleucine 121, aspartate 122, serine 212, threonine 213, glycine 214, and phenylalanine 216.

It belongs to the MacroD-type family. Zn-Macro subfamily. As to quaternary structure, monomer. Directly interacts with the lipoylated form of GcvH-L. Zn(2+) is required as a cofactor.

The catalysed reaction is 4-O-(ADP-D-ribosyl)-L-aspartyl-[protein] + H2O = L-aspartyl-[protein] + ADP-D-ribose + H(+). Its function is as follows. ADP-ribosylhydrolase that specifically reverses the SirTM-mediated mono-ADP-ribosylation at an asparatate residue of GcvH-L (SAV0324), by releasing ADP-ribose from the target protein. May play a role in the regulation of the response to host-induced oxidative stress. The chain is Protein-ADP-ribose hydrolase from Staphylococcus aureus (strain Mu50 / ATCC 700699).